A 554-amino-acid polypeptide reads, in one-letter code: Glutamine--tRNA ligase (554 aa).

The 'HIGH' region signature appears at 34-44 (PEPNGYLHIGH). ATP-binding positions include 35 to 37 (EPN) and 41 to 47 (HIGHAKS). Positions 67 and 212 each coordinate L-glutamine. ATP contacts are provided by residues threonine 231, 261 to 262 (RL), and 269 to 271 (MSK). Positions 268–272 (VMSKR) match the 'KMSKS' region motif. An interaction with tRNA region spans residues 317-324 (TKQDNTIE).

It belongs to the class-I aminoacyl-tRNA synthetase family. Monomer.

The protein localises to the cytoplasm. The catalysed reaction is tRNA(Gln) + L-glutamine + ATP = L-glutaminyl-tRNA(Gln) + AMP + diphosphate. The polypeptide is Glutamine--tRNA ligase (Escherichia coli O157:H7).